The following is an 81-amino-acid chain: MSDLFSSPDHTLDALGLRCPEPVMMVRKTVRNMQTGETLLIIADDPATTRDIPGFCTFMEHDLLAQETEGLPYRYLLRKAH.

Residue Cys-19 is the Cysteine persulfide intermediate of the active site.

Belongs to the sulfur carrier protein TusA family. As to quaternary structure, interacts with IscS.

Its subcellular location is the cytoplasm. It functions in the pathway tRNA modification. Sulfur carrier protein involved in sulfur trafficking in the cell. Part of a sulfur-relay system required for 2-thiolation during synthesis of 2-thiouridine of the modified wobble base 5-methylaminomethyl-2-thiouridine (mnm(5)s(2)U) in tRNA. Interacts with IscS and stimulates its cysteine desulfurase activity. Accepts an activated sulfur from IscS, which is then transferred to TusD, and thus determines the direction of sulfur flow from IscS to 2-thiouridine formation. Also appears to be involved in sulfur transfer for the biosynthesis of molybdopterin. The sequence is that of Sulfur carrier protein TusA from Salmonella choleraesuis (strain SC-B67).